Here is a 329-residue protein sequence, read N- to C-terminus: MATVQRVVITPGEPAGIGPDLVVQLAQREWPVELVVCADARLLTDRAALLGLPLSLLPYSPNHPAKPQSAGTLTLLPTALRAPVTPGQLSVENGQYVVDTLARACDGCLQGEFAALITGPVHKGVINDAGVPFTGHTEFFEARSQAKKVVMMLATEELRVALATTHLPLRAVADAITPALLHEVIGILHHDLRTKFGLADPHILVCGLNPHAGEGGHMGTEEIDTIVPVLDDLRAQGMRLSGPLPADTLFQPKYLDHADAVLAMYHDQGLPVLKYQGFGRGVNITLGLPFIRTSVDHGTALELAGRGQADVGSFITALNLAIKMIVNTQ.

Substrate-binding residues include H136 and T137. A divalent metal cation-binding residues include H166, H211, and H266. 3 residues coordinate substrate: K274, N283, and R292.

The protein belongs to the PdxA family. In terms of assembly, homodimer. Requires Zn(2+) as cofactor. Mg(2+) is required as a cofactor. Co(2+) serves as cofactor.

Its subcellular location is the cytoplasm. It catalyses the reaction 4-(phosphooxy)-L-threonine + NAD(+) = 3-amino-2-oxopropyl phosphate + CO2 + NADH. It participates in cofactor biosynthesis; pyridoxine 5'-phosphate biosynthesis; pyridoxine 5'-phosphate from D-erythrose 4-phosphate: step 4/5. Its function is as follows. Catalyzes the NAD(P)-dependent oxidation of 4-(phosphooxy)-L-threonine (HTP) into 2-amino-3-oxo-4-(phosphooxy)butyric acid which spontaneously decarboxylates to form 3-amino-2-oxopropyl phosphate (AHAP). This Citrobacter koseri (strain ATCC BAA-895 / CDC 4225-83 / SGSC4696) protein is 4-hydroxythreonine-4-phosphate dehydrogenase.